We begin with the raw amino-acid sequence, 124 residues long: Putative iron-sulfur cluster insertion protein ErpA (124 aa).

Cys52, Cys116, and Cys118 together coordinate iron-sulfur cluster.

This sequence belongs to the HesB/IscA family. In terms of assembly, homodimer. The cofactor is iron-sulfur cluster.

Its function is as follows. Required for insertion of 4Fe-4S clusters. In Ralstonia pickettii (strain 12J), this protein is Putative iron-sulfur cluster insertion protein ErpA.